The primary structure comprises 420 residues: Amino acid decarboxylase lolD1 (420 aa).

Lys-62 carries the post-translational modification N6-(pyridoxal phosphate)lysine. Residues Ser-194, Gly-231, and 266-269 each bind pyridoxal 5'-phosphate; that span reads EPGT. 315-316 serves as a coordination point for substrate; sequence IV. The Proton donor; shared with dimeric partner role is filled by Cys-351. Cys-351 bears the S-nitrosocysteine mark. Asp-352 contacts substrate. Tyr-381 is a binding site for pyridoxal 5'-phosphate.

The protein belongs to the Orn/Lys/Arg decarboxylase class-II family. Homodimer. Pyridoxal 5'-phosphate serves as cofactor.

The protein operates within alkaloid biosynthesis. Functionally, amino acid decarboxylase; part of the gene cluster that mediates the biosynthesis of loline alkaloids, potent insecticidal agents composed of a pyrrolizidine ring system and an uncommon ether bridge linking carbons 2 and 7. Lolines are structurally differentiated by the various modifications of the L-amino group and include norloline, loline, N-methylloline, N-acetylloline, N-acetylnorloline, and N-formylloline. The first committed step is the condensation of O-acetyl-L-homoserine (derived from L-aspartic acid) and L-proline, probably catalyzed by the gamma-type pyridoxal 5'-phosphate(PLP)-dependent enzyme lolC, to give the diamino diacid, NACPP. Ensuing cyclization, decarboxylation, and acetylation steps yield 1-exo-acetamidopyrrolizidine (AcAP). LolO is required for installation of the ether bridge upon the pathway intermediate, 1-exo-acetamidopyrrolizidine (AcAP). In sequential 2-oxoglutarate- and O(2)-consuming steps, lolO removes hydrogens from C2 and C7 of AcAP to form both carbon-oxygen bonds in N-acetylnorloline (NANL), the precursor to all other lolines. The enzymes lolD, lolE, lolF and lolT have also been proposed to be involved in the ether-bridge installation. Further processing of the exocyclic moiety of NANL by fungal N-acetamidase (LolN), methyltransferase (LolM), and cytochrome P450 (LolP) enzymes, with occasional involvement of a plant acetyltransferase, generates the other known lolines. LolN transforms NANL to norlonine which is monomethylated and dimethylated to respectively lonine and N-methyllonine (NML) by lolM. LolP catalyzes hydroxylation of the methyl group in N-methylloline (NML) and further oxygenation to N-formylloline (NFL). A plant acetyltransferase is responsible for the acetylation of loline to form N-acetylloline (NAL). LolA might interact with aspartate kinase to prevent feedback inhibition of its activity by these end products and thereby promote production of L-homoserine from L-aspartate. The chain is Amino acid decarboxylase lolD1 from Epichloe uncinata (Endophyte fungus).